We begin with the raw amino-acid sequence, 483 residues long: Docking protein 1 (483 aa).

Position 1 is an N-acetylmethionine (methionine 1). One can recognise a PH domain in the interval 4–119; it reads AVMEGPLFLQ…WVQTLCQNAF (116 aa). Position 48 is a phosphoserine (serine 48). The 109-residue stretch at 151 to 259 folds into the IRS-type PTB domain; that stretch reads EGSQFWVTVQ…HRQKIQGKAG (109 aa). Serine 269 and serine 291 each carry phosphoserine. Residues 293–326 are disordered; that stretch reads PALYSEPLDSLRIPPGPSQDSLYSDPLDSTPARA. Residues tyrosine 296, tyrosine 337, tyrosine 362, tyrosine 377, tyrosine 398, and tyrosine 409 each carry the phosphotyrosine modification. Residues 409 to 483 are disordered; sequence YAVPPPRSTK…RTGAKSEGST (75 aa). Positions 411-424 are enriched in pro residues; sequence VPPPRSTKPFPAPK. A Phosphoserine modification is found at serine 416. The span at 434–460 shows a compositional bias: polar residues; that stretch reads GAATGSGSQGHSSDTALYSQVQKSGAS. Residue tyrosine 451 is modified to Phosphotyrosine. Serine 462 is subject to Phosphoserine.

The protein belongs to the DOK family. Type A subfamily. In terms of assembly, interacts with RasGAP, INPP5D/SHIP1 and ABL1. Interacts directly with phosphorylated ITGB3. Interacts with SRMS (via the SH2 and SH3 domains). In terms of processing, constitutively tyrosine-phosphorylated. Phosphorylated by TEC. Phosphorylated by LYN. Phosphorylated on tyrosine residues by the insulin receptor kinase. Results in the negative regulation of the insulin signaling pathway. Phosphorylated on tyrosine residues by SRMS.

The protein localises to the cytoplasm. Its subcellular location is the nucleus. Its function is as follows. DOK proteins are enzymatically inert adaptor or scaffolding proteins. They provide a docking platform for the assembly of multimolecular signaling complexes. DOK1 appears to be a negative regulator of the insulin signaling pathway. Modulates integrin activation by competing with talin for the same binding site on ITGB3. In Bos taurus (Bovine), this protein is Docking protein 1 (DOK1).